A 246-amino-acid polypeptide reads, in one-letter code: Peroxisomal membrane protein 11A (246 aa).

The Cytoplasmic portion of the chain corresponds to 1–93 (MDAFIRVANQ…LCLTLANLNR (93 aa)). Residues 94 to 114 (VVYYICDTVLWAKSVGLTSGV) traverse the membrane as a helical segment. Over 115–217 (NREKWQRWAA…LNQLGIYKSN (103 aa)) the chain is Lumenal. The helical transmembrane segment at 218 to 238 (LGVVGLGGLISSLAGLLTVVY) threads the bilayer. Positions 218 to 238 (LGVVGLGGLISSLAGLLTVVY) are required for homodimerization, interaction with PEX11G, and peroxisomal localization. Residues 239–246 (PQLKLKAR) are Cytoplasmic-facing.

Belongs to the peroxin-11 family. In terms of assembly, homodimer. Heterodimer with PEX11G. Probably interacts with COPB2 and COPA. Interacts with PEX19. Interacts with FIS1. As to expression, strongly expressed in liver and at lower levels in heart, brain, kidney and testis.

The protein resides in the peroxisome membrane. May be involved in peroxisomal proliferation and may regulate peroxisomes division. May mediate binding of coatomer proteins to the peroxisomal membrane. Promotes membrane protrusion and elongation on the peroxisomal surface. The protein is Peroxisomal membrane protein 11A (Pex11a) of Mus musculus (Mouse).